The chain runs to 705 residues: Forkhead box protein P1 (705 aa).

Residues 1-19 (MMQESGSETKSNGSAIQNG) are compositionally biased toward polar residues. Residues 1–41 (MMQESGSETKSNGSAIQNGSSGGNHLLECGALRDTRSNGEA) are disordered. Serine 113 bears the Phosphoserine mark. 2 disordered regions span residues 267–286 (HTAE…TSTC) and 291–326 (APSK…EHPH). Composition is skewed to polar residues over residues 276–286 (NHSSLDLTSTC) and 291–311 (APSK…QLSV). Residues 314 to 326 (PKRESLSHEEHPH) show a composition bias toward basic and acidic residues. Residue lysine 315 forms a Glycyl lysine isopeptide (Lys-Gly) (interchain with G-Cter in SUMO2) linkage. The segment at 334 to 359 (GVCKWPGCEAVCDDFPAFLKHLNSEH) adopts a C2H2-type zinc-finger fold. Positions 376-397 (VQQLELQLAKDKERLQAMMTHL) are leucine-zipper. Glycyl lysine isopeptide (Lys-Gly) (interchain with G-Cter in SUMO2) cross-links involve residues lysine 400 and lysine 405. Positions 410-414 (PLNLV) are CTBP1-binding. Polar residues predominate over residues 418-431 (TLSKSASEASPQSL). The segment at 418–450 (TLSKSASEASPQSLPHTPTTPTAPLTPVTQGPS) is disordered. A compositionally biased stretch (low complexity) spans 432–446 (PHTPTTPTAPLTPVT). Lysine 470 participates in a covalent cross-link: Glycyl lysine isopeptide (Lys-Gly) (interchain with G-Cter in SUMO2). The segment at residues 493-583 (RPPFTYASLI…PQKISGNPSL (91 aa)) is a DNA-binding region (fork-head). Residues 639–705 (EHTNSNESDS…EDEPVNEDME (67 aa)) form a disordered region. Residues 640 to 651 (HTNSNESDSSPG) show a composition bias toward polar residues. Threonine 681 is modified (phosphothreonine). A Phosphoserine modification is found at serine 686. Positions 695–705 (YEDEPVNEDME) are enriched in acidic residues.

In terms of assembly, forms homodimers and heterodimers with FOXP2 and FOXP4. Dimerization is required for DNA-binding. Self-associates. Interacts with CTBP1. Interacts with NCOR2 and AR. Interacts with FOXP2. Interacts with TBR1. Interacts with AURKA; this interaction facilitates the phosphorylation of FOXP1, which suppresses the expression of FBXL7. Interacts with ZMYM2. Isoform 5 is specifically expressed in embryonic stem cells. Highest expression in the lung, brain, and spleen. Lower expression in heart, skeletal muscle, kidney, small intestine (isoform 3 not present) and liver.

The protein resides in the nucleus. Functionally, transcriptional repressor. Can act with CTBP1 to synergistically repress transcription but CTPBP1 is not essential. Plays an important role in the specification and differentiation of lung epithelium. Acts cooperatively with FOXP4 to regulate lung secretory epithelial cell fate and regeneration by restricting the goblet cell lineage program; the function may involve regulation of AGR2. Essential transcriptional regulator of B-cell development. Involved in regulation of cardiac muscle cell proliferation. Involved in the columnar organization of spinal motor neurons. Promotes the formation of the lateral motor neuron column (LMC) and the preganglionic motor column (PGC) and is required for respective appropriate motor axon projections. The segment-appropriate generation of spinal cord motor columns requires cooperation with other Hox proteins. Can regulate PITX3 promoter activity; may promote midbrain identity in embryonic stem cell-derived dopamine neurons by regulating PITX3. Negatively regulates the differentiation of T follicular helper cells T(FH)s. Involved in maintenance of hair follicle stem cell quiescence; the function probably involves regulation of FGF18. Represses transcription of various pro-apoptotic genes and cooperates with NF-kappa B-signaling in promoting B-cell expansion by inhibition of caspase-dependent apoptosis. Binds to CSF1R promoter elements and is involved in regulation of monocyte differentiation and macrophage functions; repression of CSF1R in monocytes seems to involve NCOR2 as corepressor. Involved in endothelial cell proliferation, tube formation and migration indicative for a role in angiogenesis; the role in neovascularization seems to implicate suppression of SEMA5B. Can negatively regulate androgen receptor signaling. Acts as a transcriptional activator of the FBXL7 promoter; this activity is regulated by AURKA. Its function is as follows. Involved in transcriptional regulation in embryonic stem cells (ESCs). Stimulates expression of transcription factors that are required for pluripotency and decreases expression of differentiation-associated genes. Has distinct DNA-binding specifities as compared to the canonical form and preferentially binds DNA with the sequence 5'-CGATACAA-3' (or closely related sequences). Promotes ESC self-renewal and pluripotency. The chain is Forkhead box protein P1 (Foxp1) from Mus musculus (Mouse).